The chain runs to 383 residues: MHC class I polypeptide-related sequence A (383 aa).

The first 23 residues, 1-23 (MGLGPVFLLLAGIFPFAPPGAAA), serve as a signal peptide directing secretion. At 24–307 (EPHSLRYNLT…GKVLVLQSHW (284 aa)) the chain is on the extracellular side. N-linked (GlcNAc...) asparagine glycosylation occurs at Asn31. Cys59 and Cys64 form a disulfide bridge. An N-linked (GlcNAc...) asparagine glycan is attached at Asn79. Cys119 and Cys187 are oxidised to a cystine. The Ig-like C1-type domain maps to 207–296 (PMVNVTRSEA…SGNHSTHPVP (90 aa)). N-linked (GlcNAc...) asparagine glycosylation is found at Asn210, Asn220, and Asn261. Cys225 and Cys282 form a disulfide bridge. Residues 308-328 (QTFHVSAVAAAAIFVIIIFYV) form a helical membrane-spanning segment. The Cytoplasmic portion of the chain corresponds to 329-383 (RCCKKKTSAAEGPELVSLQVLDQHPVGTSDHRDATQLGFQPLMSDLGSTGSTEGA). 2 S-palmitoyl cysteine lipidation sites follow: Cys330 and Cys331.

Belongs to the MHC class I family. MIC subfamily. As to quaternary structure, unlike classical MHC class I molecules, does not form a heterodimer with beta-2-microglobulin. Binds as a monomer to a KLRK1/NKG2D homodimer. KLRK1 forms a complex with HCST/DAP10 in which KLRK1 binds MICA while HCST acts as an adapter molecule which enables signal transduction. Interacts with PDIA6 on the surface of tumor cells, leading to disulfide bond reduction which is required for release of MICA from tumor cells. In terms of assembly, (Microbial infection) Interacts with human cytomegalovirus/HHV-5 protein UL142. N-glycosylated. Glycosylation is not essential for interaction with KLRK1/NKG2D but enhances complex formation. In terms of processing, proteolytically cleaved and released from the cell surface of tumor cells which impairs KLRK1/NKG2D expression and T-cell activation. Post-translationally, palmitoylated on cysteine residues in the cytoplasmic tail leading to its association with membrane microdomains enriched in cholesterol. N-glycosylation is necessary for cell surface expression. In terms of processing, (Microbial infection) Ubiquitinated by human herpesvirus 8 protein K5, leading to degradation. Widely expressed with the exception of the central nervous system where it is absent. Expressed predominantly in gastric epithelium and also in monocytes, keratinocytes, endothelial cells, fibroblasts and in the outer layer of Hassal's corpuscles within the medulla of normal thymus. In skin, expressed mainly in the keratin layers, basal cells, ducts and follicles. Also expressed in many, but not all, epithelial tumors of lung, breast, kidney, ovary, prostate and colon. In thyomas, overexpressed in cortical and medullar epithelial cells. Tumors expressing MICA display increased levels of gamma delta T-cells.

Its subcellular location is the cell membrane. The protein localises to the cytoplasm. Its function is as follows. Widely expressed membrane-bound protein which acts as a ligand to stimulate an activating receptor KLRK1/NKG2D, expressed on the surface of essentially all human natural killer (NK), gammadelta T and CD8 alphabeta T-cells. Up-regulated in stressed conditions, such as viral and bacterial infections or DNA damage response, serves as signal of cellular stress, and engagement of KLRK1/NKG2D by MICA triggers NK-cells resulting in a range of immune effector functions, such as cytotoxicity and cytokine production. The sequence is that of MHC class I polypeptide-related sequence A from Homo sapiens (Human).